The sequence spans 714 residues: Hormonally up-regulated neu tumor-associated kinase (714 aa).

The span at methionine 1–proline 16 shows a compositional bias: low complexity. Positions methionine 1–proline 28 are disordered. The Protein kinase domain occupies leucine 62–leucine 320. ATP-binding positions include leucine 68–valine 76 and lysine 91. Aspartate 186 acts as the Proton acceptor in catalysis. The segment covering histidine 624–glycine 635 has biased composition (basic and acidic residues). 2 disordered regions span residues histidine 624–lysine 658 and lysine 674–cysteine 714. Polar residues predominate over residues serine 692–serine 703.

The protein belongs to the protein kinase superfamily. CAMK Ser/Thr protein kinase family. SNF1 subfamily.

It carries out the reaction L-seryl-[protein] + ATP = O-phospho-L-seryl-[protein] + ADP + H(+). It catalyses the reaction L-threonyl-[protein] + ATP = O-phospho-L-threonyl-[protein] + ADP + H(+). The polypeptide is Hormonally up-regulated neu tumor-associated kinase (Hunk) (Mus musculus (Mouse)).